Reading from the N-terminus, the 573-residue chain is 3-(3-hydroxy-phenyl)propionate/3-hydroxycinnamic acid hydroxylase (573 aa).

FAD is bound by residues 18 to 47 and 283 to 293; these read DVVIVGAGPVGLTLANILGLQGVRTMIVEE and FRKGRMFLAGD.

This sequence belongs to the PheA/TfdB FAD monooxygenase family. FAD is required as a cofactor.

The enzyme catalyses 3-(3-hydroxyphenyl)propanoate + NADH + O2 + H(+) = 3-(2,3-dihydroxyphenyl)propanoate + NAD(+) + H2O. The catalysed reaction is (2E)-3-(3-hydroxyphenyl)prop-2-enoate + NADH + O2 + H(+) = (2E)-3-(2,3-dihydroxyphenyl)prop-2-enoate + NAD(+) + H2O. It participates in aromatic compound metabolism; 3-phenylpropanoate degradation. Its function is as follows. Catalyzes the insertion of one atom of molecular oxygen into position 2 of the phenyl ring of 3-(3-hydroxyphenyl)propionate (3-HPP) and hydroxycinnamic acid (3HCI). This chain is 3-(3-hydroxy-phenyl)propionate/3-hydroxycinnamic acid hydroxylase, found in Mycobacterium sp. (strain KMS).